Reading from the N-terminus, the 388-residue chain is Probable peptidoglycan glycosyltransferase FtsW (388 aa).

Residues 1–19 (MMSPSTSAPHNQPIQPELD) lie on the Cytoplasmic side of the membrane. Residues 20 to 40 (VLLVSTVLLLLGLGLVMVYSA) traverse the membrane as a helical segment. Residues 41–55 (SIAIAEAKFGEGSSY) lie on the Periplasmic side of the membrane. A helical membrane pass occupies residues 56–76 (YFLARQASYILAGIAVGIGCF). The Cytoplasmic portion of the chain corresponds to 77–89 (RIPLRWWQAYSHY). The chain crosses the membrane as a helical span at residues 90–110 (LLGLGILLLLVVLIPGISHEI). Over 111–116 (NGSRRW) the chain is Periplasmic. The chain crosses the membrane as a helical span at residues 117–137 (IPLGITSFQPSELMKLIILIF). The Cytoplasmic portion of the chain corresponds to 138–151 (TADYVVRKAAFKDH). Residues 152–172 (FFKGFLPILALLTIVSLLLLM) form a helical membrane-spanning segment. Over 173–175 (EPD) the chain is Periplasmic. The next 2 membrane-spanning stretches (helical) occupy residues 176-196 (LGAT…NGMS) and 197-217 (LKMF…LIII). Residues 218 to 284 (EPYRMDRINA…DFMFAVLAEE (67 aa)) are Periplasmic-facing. Residues 285-305 (LGFAGVVTVISLFFFLLVRIF) traverse the membrane as a helical segment. Over 306-324 (KVGRTAARLGDQFGSLVAQ) the chain is Cytoplasmic. The helical transmembrane segment at 325–345 (GIGVWLGLQAFINMGVNMGLL) threads the bilayer. At 346 to 351 (PTKGLT) the chain is on the periplasmic side. Residues 352–372 (LPFMSYGGSSIVINSIAIAIL) traverse the membrane as a helical segment. At 373 to 388 (LRIDWENRLKRRGLNA) the chain is on the cytoplasmic side.

It belongs to the SEDS family. FtsW subfamily.

The protein localises to the cell inner membrane. The enzyme catalyses [GlcNAc-(1-&gt;4)-Mur2Ac(oyl-L-Ala-gamma-D-Glu-L-Lys-D-Ala-D-Ala)](n)-di-trans,octa-cis-undecaprenyl diphosphate + beta-D-GlcNAc-(1-&gt;4)-Mur2Ac(oyl-L-Ala-gamma-D-Glu-L-Lys-D-Ala-D-Ala)-di-trans,octa-cis-undecaprenyl diphosphate = [GlcNAc-(1-&gt;4)-Mur2Ac(oyl-L-Ala-gamma-D-Glu-L-Lys-D-Ala-D-Ala)](n+1)-di-trans,octa-cis-undecaprenyl diphosphate + di-trans,octa-cis-undecaprenyl diphosphate + H(+). Its pathway is cell wall biogenesis; peptidoglycan biosynthesis. In terms of biological role, peptidoglycan polymerase that is essential for cell division. This Nitrosomonas europaea (strain ATCC 19718 / CIP 103999 / KCTC 2705 / NBRC 14298) protein is Probable peptidoglycan glycosyltransferase FtsW.